The sequence spans 351 residues: MLPRAVAHISAAALDHNLSALAQRSGTRLLLPVKADAYGHGMELVGRLAAAHPDVWGLAVATPQEAETLARLDLGKPLLLLTPPAPEELGALADLGVRLPVSTLAEVEALPAHAQAHLKVDTGMNRLGARPADAVAVGRALAERGQLEGVYTHFATADEPDLSFALTQLVRFRSVLDALPPVLAHCANGGGVLSFGRIEGMSLARPGLAAYGYVPEHLRHVCALRPVMTVRARVNQLHTAYPGETVSYGALWRAERETGVAVVGMGYADGYPRNATGRAAVLIGGERRPVLGRICMDQMMVDVTGLDVGVGDWAELWGEGDLSVTDVARWGDTIEYEVLTGLGSRVERRVG.

Residue Lys-34 is the Proton acceptor; specific for D-alanine of the active site. At Lys-34 the chain carries N6-(pyridoxal phosphate)lysine. Arg-126 is a substrate binding site. Residue Tyr-248 is the Proton acceptor; specific for L-alanine of the active site. Residue Met-296 participates in substrate binding.

Belongs to the alanine racemase family. Requires pyridoxal 5'-phosphate as cofactor.

The catalysed reaction is L-alanine = D-alanine. It functions in the pathway amino-acid biosynthesis; D-alanine biosynthesis; D-alanine from L-alanine: step 1/1. Functionally, catalyzes the interconversion of L-alanine and D-alanine. May also act on other amino acids. In Deinococcus radiodurans (strain ATCC 13939 / DSM 20539 / JCM 16871 / CCUG 27074 / LMG 4051 / NBRC 15346 / NCIMB 9279 / VKM B-1422 / R1), this protein is Alanine racemase (alr).